We begin with the raw amino-acid sequence, 308 residues long: Homoserine O-acetyltransferase (308 aa).

The Acyl-thioester intermediate role is filled by Cys142. Residues Lys163 and Ser192 each coordinate substrate. Residue His235 is the Proton acceptor of the active site. The active site involves Glu237. Arg249 is a substrate binding site.

The protein belongs to the MetA family.

It is found in the cytoplasm. It carries out the reaction L-homoserine + acetyl-CoA = O-acetyl-L-homoserine + CoA. It participates in amino-acid biosynthesis; L-methionine biosynthesis via de novo pathway; O-acetyl-L-homoserine from L-homoserine: step 1/1. Functionally, transfers an acetyl group from acetyl-CoA to L-homoserine, forming acetyl-L-homoserine. The polypeptide is Homoserine O-acetyltransferase (Agrobacterium fabrum (strain C58 / ATCC 33970) (Agrobacterium tumefaciens (strain C58))).